Here is a 468-residue protein sequence, read N- to C-terminus: Flavin-containing monooxygenase FMO GS-OX-like 1 (468 aa).

Position 16 to 21 (Gly-16 to Gly-21) interacts with FAD. Gly-211–Gly-216 lines the NADP(+) pocket.

Belongs to the FMO family. FAD is required as a cofactor.

Functionally, catalyzes the conversion of methylthioalkyl glucosinolates of any chain length into methylsulfinylalkyl glucosinolates. The sequence is that of Flavin-containing monooxygenase FMO GS-OX-like 1 from Arabidopsis thaliana (Mouse-ear cress).